Consider the following 311-residue polypeptide: Fructose-1,6-bisphosphatase class 1 (311 aa).

The Mg(2+) site is built by E90, D110, L112, and D113. Residues 113 to 116 (DGSS), Y221, and K251 each bind substrate. Position 257 (E257) interacts with Mg(2+).

It belongs to the FBPase class 1 family. Homotetramer. The cofactor is Mg(2+).

It is found in the cytoplasm. It carries out the reaction beta-D-fructose 1,6-bisphosphate + H2O = beta-D-fructose 6-phosphate + phosphate. It participates in carbohydrate biosynthesis; gluconeogenesis. The protein is Fructose-1,6-bisphosphatase class 1 of Methanospirillum hungatei JF-1 (strain ATCC 27890 / DSM 864 / NBRC 100397 / JF-1).